The primary structure comprises 514 residues: Beta-secretase 2 (514 aa).

The N-terminal stretch at 1 to 20 (MGALLRALLLPLLAQWLLRA) is a signal peptide. Positions 21–62 (VPVLAPAPFTLPLQVAGAANHRASTVPGLGTPELPRADGLAL) are excised as a propeptide. Topologically, residues 21 to 469 (VPVLAPAPFT…NEPILWIVSY (449 aa)) are extracellular. In terms of domain architecture, Peptidase A1 spans 88–425 (YYLEMLIGTP…DRAQRRVGFA (338 aa)). Asp106 is a catalytic residue. Residue Asn166 is glycosylated (N-linked (GlcNAc...) asparagine). Disulfide bonds link Cys229–Cys429, Cys288–Cys453, and Cys340–Cys389. Residue Asp299 is part of the active site. Residue Asn362 is glycosylated (N-linked (GlcNAc...) asparagine). Residues 470-490 (ALMSVCGAILLVLILLLLFPL) form a helical membrane-spanning segment. The Cytoplasmic portion of the chain corresponds to 491–514 (HCRHAPRDPEVVNDESSLVRHRWK).

The protein belongs to the peptidase A1 family. In terms of assembly, monomer. Interacts with RTN3 and RTN4. Post-translationally, undergoes autoproteolytic cleavage. In terms of processing, glycosylated.

It is found in the cell membrane. The protein localises to the golgi apparatus. Its subcellular location is the endoplasmic reticulum. It localises to the endosome. The protein resides in the melanosome. It catalyses the reaction Broad endopeptidase specificity. Cleaves Glu-Val-Asn-Leu-|-Asp-Ala-Glu-Phe in the Swedish variant of Alzheimer's amyloid precursor protein.. Its function is as follows. Responsible for the proteolytic processing of the amyloid precursor protein (APP). Cleaves APP, between residues 690 and 691, leading to the generation and extracellular release of beta-cleaved soluble APP, and a corresponding cell-associated C-terminal fragment which is later released by gamma-secretase. It has also been shown that it can cleave APP between residues 671 and 672. Involved in the proteolytic shedding of PMEL at early stages of melanosome biogenesis. Cleaves PMEL within the M-beta fragment to release the amyloidogenic PMEL luminal fragment containing M-alpha and a small portion of M-beta N-terminus. This is a prerequisite step for subsequent processing and assembly of PMEL fibrils into amyloid sheets. Responsible also for the proteolytic processing of CLTRN in pancreatic beta cells. This Rattus norvegicus (Rat) protein is Beta-secretase 2 (Bace2).